We begin with the raw amino-acid sequence, 634 residues long: Threonine--tRNA ligase (634 aa).

The 61-residue stretch at 1-61 (MINITLPDGS…DHDASLRIIT (61 aa)) folds into the TGS domain. The catalytic stretch occupies residues 243 to 534 (DHRRIGKAQD…LIEHHAGAFP (292 aa)). Positions 334, 385, and 511 each coordinate Zn(2+).

The protein belongs to the class-II aminoacyl-tRNA synthetase family. In terms of assembly, homodimer. The cofactor is Zn(2+).

The protein resides in the cytoplasm. The catalysed reaction is tRNA(Thr) + L-threonine + ATP = L-threonyl-tRNA(Thr) + AMP + diphosphate + H(+). Functionally, catalyzes the attachment of threonine to tRNA(Thr) in a two-step reaction: L-threonine is first activated by ATP to form Thr-AMP and then transferred to the acceptor end of tRNA(Thr). Also edits incorrectly charged L-seryl-tRNA(Thr). The chain is Threonine--tRNA ligase from Xanthomonas euvesicatoria pv. vesicatoria (strain 85-10) (Xanthomonas campestris pv. vesicatoria).